The primary structure comprises 146 residues: Large ribosomal subunit protein uL22 (146 aa).

This sequence belongs to the universal ribosomal protein uL22 family. In terms of assembly, part of the 50S ribosomal subunit.

In terms of biological role, this protein binds specifically to 23S rRNA; its binding is stimulated by other ribosomal proteins, e.g. L4, L17, and L20. It is important during the early stages of 50S assembly. It makes multiple contacts with different domains of the 23S rRNA in the assembled 50S subunit and ribosome. The globular domain of the protein is located near the polypeptide exit tunnel on the outside of the subunit, while an extended beta-hairpin is found that lines the wall of the exit tunnel in the center of the 70S ribosome. The protein is Large ribosomal subunit protein uL22 of Nocardioides sp. (strain ATCC BAA-499 / JS614).